The sequence spans 298 residues: Esterase Rv0045c (298 aa).

Catalysis depends on Ser122, which acts as the Nucleophile. Active-site residues include Asp146 and His277.

It belongs to the AB hydrolase superfamily. Monomer.

The enzyme catalyses a carboxylic ester + H2O = an alcohol + a carboxylate + H(+). It carries out the reaction a butanoate ester + H2O = an aliphatic alcohol + butanoate + H(+). It catalyses the reaction an acetyl ester + H2O = an aliphatic alcohol + acetate + H(+). The catalysed reaction is a hexanoate ester + H2O = an aliphatic alcohol + hexanoate + H(+). The enzyme catalyses a tetradecanoate ester + H2O = an aliphatic alcohol + tetradecanoate + H(+). Its activity is regulated as follows. Hydrolysis of a fluorogenic ester substrate (MOAME) is allosterically inhibited by divalent transition metal cations (Cu(2+), Zn(2+), Ni(2+) and Co(2+)). Inhibition is largely due to a two order of magnitude drop in kcat, with relatively little change in KM. The thermal stability decreases with increasing concentrations of Ni(2+). Esterase likely involved in ester/lipid metabolism. Shows strong substrate selectivity toward short, straight chain alkyl esters with the highest activity toward four atom chains. The physiological substrate is unknown. Is able to hydrolyze ester bonds within a wide range of p-nitrophenyl derivatives (C2-C14) in vitro. The sequence is that of Esterase Rv0045c from Mycobacterium tuberculosis (strain ATCC 25618 / H37Rv).